The following is a 318-amino-acid chain: 4-hydroxy-3-methylbut-2-enyl diphosphate reductase (318 aa).

Cys-12 is a binding site for [4Fe-4S] cluster. Residues His-41 and His-74 each coordinate (2E)-4-hydroxy-3-methylbut-2-enyl diphosphate. The dimethylallyl diphosphate site is built by His-41 and His-74. Positions 41 and 74 each coordinate isopentenyl diphosphate. Cys-96 serves as a coordination point for [4Fe-4S] cluster. Position 124 (His-124) interacts with (2E)-4-hydroxy-3-methylbut-2-enyl diphosphate. His-124 lines the dimethylallyl diphosphate pocket. His-124 is a binding site for isopentenyl diphosphate. Glu-126 serves as the catalytic Proton donor. Thr-167 is a binding site for (2E)-4-hydroxy-3-methylbut-2-enyl diphosphate. Cys-197 lines the [4Fe-4S] cluster pocket. Ser-225, Ser-226, Asn-227, and Ser-269 together coordinate (2E)-4-hydroxy-3-methylbut-2-enyl diphosphate. Residues Ser-225, Ser-226, Asn-227, and Ser-269 each coordinate dimethylallyl diphosphate. 4 residues coordinate isopentenyl diphosphate: Ser-225, Ser-226, Asn-227, and Ser-269.

Belongs to the IspH family. It depends on [4Fe-4S] cluster as a cofactor.

It carries out the reaction isopentenyl diphosphate + 2 oxidized [2Fe-2S]-[ferredoxin] + H2O = (2E)-4-hydroxy-3-methylbut-2-enyl diphosphate + 2 reduced [2Fe-2S]-[ferredoxin] + 2 H(+). The enzyme catalyses dimethylallyl diphosphate + 2 oxidized [2Fe-2S]-[ferredoxin] + H2O = (2E)-4-hydroxy-3-methylbut-2-enyl diphosphate + 2 reduced [2Fe-2S]-[ferredoxin] + 2 H(+). It participates in isoprenoid biosynthesis; dimethylallyl diphosphate biosynthesis; dimethylallyl diphosphate from (2E)-4-hydroxy-3-methylbutenyl diphosphate: step 1/1. It functions in the pathway isoprenoid biosynthesis; isopentenyl diphosphate biosynthesis via DXP pathway; isopentenyl diphosphate from 1-deoxy-D-xylulose 5-phosphate: step 6/6. In terms of biological role, catalyzes the conversion of 1-hydroxy-2-methyl-2-(E)-butenyl 4-diphosphate (HMBPP) into a mixture of isopentenyl diphosphate (IPP) and dimethylallyl diphosphate (DMAPP). Acts in the terminal step of the DOXP/MEP pathway for isoprenoid precursor biosynthesis. This is 4-hydroxy-3-methylbut-2-enyl diphosphate reductase from Francisella tularensis subsp. holarctica (strain LVS).